Reading from the N-terminus, the 240-residue chain is RNA-free ribonuclease P (240 aa).

Belongs to the HARP family.

The catalysed reaction is Endonucleolytic cleavage of RNA, removing 5'-extranucleotides from tRNA precursor.. Functionally, RNA-free RNase P that catalyzes the removal of the 5'-leader sequence from pre-tRNA to produce the mature 5'-terminus. This Methanococcus aeolicus (strain ATCC BAA-1280 / DSM 17508 / OCM 812 / Nankai-3) protein is RNA-free ribonuclease P.